Consider the following 107-residue polypeptide: ATP synthase peripheral stalk subunit F6, mitochondrial (107 aa).

A mitochondrion-targeting transit peptide spans 1–31 (MILQRLFRFSVIRSAVSVYLRRNIGVTAVAF). An N6-acetyllysine mark is found at Lys-40, Lys-45, and Lys-78. Lys-93 and Lys-98 each carry N6-acetyllysine; alternate. N6-succinyllysine; alternate occurs at positions 93 and 98. The residue at position 104 (Lys-104) is an N6-acetyllysine.

The protein belongs to the eukaryotic ATPase subunit F6 family. As to quaternary structure, component of the ATP synthase complex composed at least of ATP5F1A/subunit alpha, ATP5F1B/subunit beta, ATP5MC1/subunit c (homooctomer), MT-ATP6/subunit a, MT-ATP8/subunit 8, ATP5ME/subunit e, ATP5MF/subunit f, ATP5MG/subunit g, ATP5MK/subunit k, ATP5MJ/subunit j, ATP5F1C/subunit gamma, ATP5F1D/subunit delta, ATP5F1E/subunit epsilon, ATP5PF/subunit F6, ATP5PB/subunit b, ATP5PD/subunit d, ATP5PO/subunit OSCP. ATP synthase complex consists of a soluble F(1) head domain (subunits alpha(3) and beta(3)) - the catalytic core - and a membrane F(0) domain - the membrane proton channel (subunits c, a, 8, e, f, g, k and j). These two domains are linked by a central stalk (subunits gamma, delta, and epsilon) rotating inside the F1 region and a stationary peripheral stalk (subunits F6, b, d, and OSCP).

It is found in the mitochondrion. The protein resides in the mitochondrion inner membrane. Functionally, subunit F6, of the mitochondrial membrane ATP synthase complex (F(1)F(0) ATP synthase or Complex V) that produces ATP from ADP in the presence of a proton gradient across the membrane which is generated by electron transport complexes of the respiratory chain. ATP synthase complex consist of a soluble F(1) head domain - the catalytic core - and a membrane F(1) domain - the membrane proton channel. These two domains are linked by a central stalk rotating inside the F(1) region and a stationary peripheral stalk. During catalysis, ATP synthesis in the catalytic domain of F(1) is coupled via a rotary mechanism of the central stalk subunits to proton translocation. In vivo, can only synthesize ATP although its ATP hydrolase activity can be activated artificially in vitro. Part of the complex F(0) domain. Part of the complex F(0) domain and the peripheric stalk, which acts as a stator to hold the catalytic alpha(3)beta(3) subcomplex and subunit a/ATP6 static relative to the rotary elements. This chain is ATP synthase peripheral stalk subunit F6, mitochondrial, found in Pongo abelii (Sumatran orangutan).